The sequence spans 211 residues: Methylthioribulose-1-phosphate dehydratase (211 aa).

Zn(2+)-binding residues include histidine 101 and histidine 103.

It belongs to the aldolase class II family. MtnB subfamily. Zn(2+) is required as a cofactor.

The enzyme catalyses 5-(methylsulfanyl)-D-ribulose 1-phosphate = 5-methylsulfanyl-2,3-dioxopentyl phosphate + H2O. Its pathway is amino-acid biosynthesis; L-methionine biosynthesis via salvage pathway; L-methionine from S-methyl-5-thio-alpha-D-ribose 1-phosphate: step 2/6. Catalyzes the dehydration of methylthioribulose-1-phosphate (MTRu-1-P) into 2,3-diketo-5-methylthiopentyl-1-phosphate (DK-MTP-1-P). The sequence is that of Methylthioribulose-1-phosphate dehydratase from Alcanivorax borkumensis (strain ATCC 700651 / DSM 11573 / NCIMB 13689 / SK2).